Consider the following 337-residue polypeptide: Phosphate acyltransferase (337 aa).

It belongs to the PlsX family. In terms of assembly, homodimer. Probably interacts with PlsY.

The protein localises to the cytoplasm. The catalysed reaction is a fatty acyl-[ACP] + phosphate = an acyl phosphate + holo-[ACP]. The protein operates within lipid metabolism; phospholipid metabolism. Catalyzes the reversible formation of acyl-phosphate (acyl-PO(4)) from acyl-[acyl-carrier-protein] (acyl-ACP). This enzyme utilizes acyl-ACP as fatty acyl donor, but not acyl-CoA. The chain is Phosphate acyltransferase from Halalkalibacterium halodurans (strain ATCC BAA-125 / DSM 18197 / FERM 7344 / JCM 9153 / C-125) (Bacillus halodurans).